A 992-amino-acid polypeptide reads, in one-letter code: UPF0182 protein MT3285 (992 aa).

Transmembrane regions (helical) follow at residues 17 to 39 (RILI…LIDA), 59 to 81 (LATR…FGGL), 113 to 135 (LVGI…SYWA), 169 to 191 (LMLS…AHYI), 212 to 229 (LVSL…AYWL), 255 to 277 (VLPA…FSAI), and 284 to 306 (IPAI…WPLI). The disordered stretch occupies residues 906–938 (PTEAAVPPSPAANPPPPASGPQPPPVTAAPPVP). Residues 912-938 (PPSPAANPPPPASGPQPPPVTAAPPVP) are compositionally biased toward pro residues.

The protein belongs to the UPF0182 family.

It localises to the cell membrane. The protein is UPF0182 protein MT3285 of Mycobacterium tuberculosis (strain CDC 1551 / Oshkosh).